Reading from the N-terminus, the 1026-residue chain is Tyrosine-protein phosphatase 1 (1026 aa).

The region spanning 29 to 315 (IRCTVTFLDS…EQHTFFRLKT (287 aa)) is the FERM domain. Disordered stretches follow at residues 376-396 (SIDSSRYTNTTTTDSPELPSS), 430-456 (PLTTPLSPRRTRDYATDSESSAPSLRQ), 489-515 (GIHASTASVRPVSSGSTPNGASRKSAN), and 584-616 (SFASAGIGGSPPRSKRSPQSNKSSSPVGEDQVV). The segment covering 446–456 (DSESSAPSLRQ) has biased composition (polar residues). Residues 600 to 609 (SPQSNKSSSP) are compositionally biased toward low complexity. Residues 617–689 (TIKMRPDRHG…DHVVQFIRSA (73 aa)) enclose the PDZ domain. In terms of domain architecture, Tyrosine-protein phosphatase spans 753–1011 (VVDHFEMLYR…TFVCESILRA (259 aa)). Substrate-binding positions include aspartate 920, 952–958 (CSAGIGR), and glutamine 996. Cysteine 952 functions as the Phosphocysteine intermediate in the catalytic mechanism.

Belongs to the protein-tyrosine phosphatase family. Non-receptor class subfamily.

It localises to the cytoplasm. It is found in the cytoskeleton. It carries out the reaction O-phospho-L-tyrosyl-[protein] + H2O = L-tyrosyl-[protein] + phosphate. The sequence is that of Tyrosine-protein phosphatase 1 (ptp-1) from Caenorhabditis elegans.